Consider the following 359-residue polypeptide: Guanine nucleotide-binding protein subunit alpha-11 (359 aa).

2 S-palmitoyl cysteine lipidation sites follow: Cys9 and Cys10. In terms of domain architecture, G-alpha spans Arg38–Val359. The G1 motif stretch occupies residues Lys41–Thr54. Residues Gly46–Ser53 and Leu180–Arg183 contribute to the GTP site. A Mg(2+)-binding site is contributed by Ser53. A G2 motif region spans residues Asp178–Thr186. Mg(2+) is bound at residue Thr186. The segment at Phe201–Arg210 is G3 motif. The tract at residues Ile270–Asp277 is G4 motif. Residues Asn274–Asp277 and Ala331 contribute to the GTP site. The tract at residues Thr329–Thr334 is G5 motif.

It belongs to the G-alpha family. G(q) subfamily. As to quaternary structure, g proteins are composed of 3 units; alpha, beta and gamma. The alpha chain contains the guanine nucleotide binding site.

It is found in the cell membrane. Its subcellular location is the cytoplasm. It carries out the reaction GTP + H2O = GDP + phosphate + H(+). Its function is as follows. Guanine nucleotide-binding proteins (G proteins) function as transducers downstream of G protein-coupled receptors (GPCRs) in numerous signaling cascades. The alpha chain contains the guanine nucleotide binding site and alternates between an active, GTP-bound state and an inactive, GDP-bound state. Signaling by an activated GPCR promotes GDP release and GTP binding. The alpha subunit has a low GTPase activity that converts bound GTP to GDP, thereby terminating the signal. Both GDP release and GTP hydrolysis are modulated by numerous regulatory proteins. Signaling is mediated via phospholipase C-beta-dependent inositol lipid hydrolysis for signal propagation: activates phospholipase C-beta: following GPCR activation, GNA11 activates PLC-beta (PLCB1, PLCB2, PLCB3 or PLCB4), leading to production of diacylglycerol (DAG) and inositol 1,4,5-trisphosphate (IP3). This Xenopus laevis (African clawed frog) protein is Guanine nucleotide-binding protein subunit alpha-11 (gna11).